A 219-amino-acid polypeptide reads, in one-letter code: PKHD-type hydroxylase Mmar10_1675 (219 aa).

In terms of domain architecture, Fe2OG dioxygenase spans 77–171 (TLSRILVSRY…RVAVVGWVRS (95 aa)). Histidine 95, aspartate 97, and histidine 152 together coordinate Fe cation. Residue arginine 162 coordinates 2-oxoglutarate.

It depends on Fe(2+) as a cofactor. Requires L-ascorbate as cofactor.

The protein is PKHD-type hydroxylase Mmar10_1675 of Maricaulis maris (strain MCS10) (Caulobacter maris).